A 157-amino-acid chain; its full sequence is Phosphopantetheine adenylyltransferase (157 aa).

Substrate is bound at residue T10. ATP contacts are provided by residues T10–F11 and H18. Substrate-binding residues include K42, L74, and R88. ATP-binding positions include G89–R91, E99, and N124–S130.

Belongs to the bacterial CoaD family. In terms of assembly, homohexamer. Mg(2+) is required as a cofactor.

The protein localises to the cytoplasm. It carries out the reaction (R)-4'-phosphopantetheine + ATP + H(+) = 3'-dephospho-CoA + diphosphate. Its pathway is cofactor biosynthesis; coenzyme A biosynthesis; CoA from (R)-pantothenate: step 4/5. Functionally, reversibly transfers an adenylyl group from ATP to 4'-phosphopantetheine, yielding dephospho-CoA (dPCoA) and pyrophosphate. This Helicobacter acinonychis (strain Sheeba) protein is Phosphopantetheine adenylyltransferase.